The following is a 394-amino-acid chain: Elongation factor Tu (394 aa).

The tr-type G domain maps to Lys10–Glu204. Positions Gly19–Thr26 are G1. Residue Gly19–Thr26 participates in GTP binding. Thr26 provides a ligand contact to Mg(2+). Residues Gly60–Ala64 are G2. The tract at residues Asp81 to Gly84 is G3. Residues Asp81–His85 and Asn136–Asp139 contribute to the GTP site. Residues Asn136–Asp139 are G4. The interval Ser174–Leu176 is G5.

This sequence belongs to the TRAFAC class translation factor GTPase superfamily. Classic translation factor GTPase family. EF-Tu/EF-1A subfamily. As to quaternary structure, monomer.

Its subcellular location is the cytoplasm. It catalyses the reaction GTP + H2O = GDP + phosphate + H(+). Functionally, GTP hydrolase that promotes the GTP-dependent binding of aminoacyl-tRNA to the A-site of ribosomes during protein biosynthesis. In Vibrio parahaemolyticus serotype O3:K6 (strain RIMD 2210633), this protein is Elongation factor Tu.